A 456-amino-acid chain; its full sequence is MEKLWGGRFQGKSEAWIDDFGASISFDQKMAKEDLAGSLAHVAMLSKCGIIPASEAAEITAGLKILQEKLALGELEFSTVNEDIHLNIEKLLHEEIGPVAGKLHTARSRNDQVATDMHLYLKQAVAEIIQSLKHLRVVLVQKAEANVETIMPGYTHLQHAQPISFAHHLLAYFGMFTRDLERLEESVKRIDISPLGSAALAGTTFPIDRAYSAELLGFSAIYENSLDGVSDRDFIIEFLSNSSILMMHLSRFCEELILWTSHEFQFVELTDAFSTGSSIMPQKKNPDMAELIRGKTGRVYGNLFGMLTVLKGLPLAYNKDLQEDKEGMFDTLETVQTSLDIFAGMIETMKINTEIMEESTQKDFSNATELADYLAKKGVPFREAHEIVGKLVLECTQNGIYLQDVALSHYQEINPLIDDDIYVVLSSKTAVQKRNSYGGTGFDQIKVALENAKKTL.

This sequence belongs to the lyase 1 family. Argininosuccinate lyase subfamily.

The protein resides in the cytoplasm. The enzyme catalyses 2-(N(omega)-L-arginino)succinate = fumarate + L-arginine. Its pathway is amino-acid biosynthesis; L-arginine biosynthesis; L-arginine from L-ornithine and carbamoyl phosphate: step 3/3. The sequence is that of Argininosuccinate lyase from Listeria monocytogenes serotype 4b (strain CLIP80459).